Consider the following 546-residue polypeptide: Tryptophan biosynthesis protein TrpCD (546 aa).

Positions 1–226 (MMDFGFVDSL…FVQTVCGGEK (226 aa)) are indole-3-glycerol phosphate synthase. The tract at residues 227–546 (MIEDVLRGLD…EEIACKSTSM (320 aa)) is anthranilate phosphoribosyltransferase. 5-phospho-alpha-D-ribose 1-diphosphate-binding positions include Gly295, 298-299 (GD), Ser303, 305-308 (NVST), 322-330 (KHGNRAVSS), and Ser334. Gly295 serves as a coordination point for anthranilate. Ser307 is a Mg(2+) binding site. Asn325 is an anthranilate binding site. Arg380 provides a ligand contact to anthranilate. Mg(2+) is bound by residues Asp437 and Glu438.

It in the N-terminal section; belongs to the TrpC family. This sequence in the C-terminal section; belongs to the anthranilate phosphoribosyltransferase family. The cofactor is Mg(2+).

The catalysed reaction is 1-(2-carboxyphenylamino)-1-deoxy-D-ribulose 5-phosphate + H(+) = (1S,2R)-1-C-(indol-3-yl)glycerol 3-phosphate + CO2 + H2O. It carries out the reaction N-(5-phospho-beta-D-ribosyl)anthranilate + diphosphate = 5-phospho-alpha-D-ribose 1-diphosphate + anthranilate. It functions in the pathway amino-acid biosynthesis; L-tryptophan biosynthesis; L-tryptophan from chorismate: step 2/5. The protein operates within amino-acid biosynthesis; L-tryptophan biosynthesis; L-tryptophan from chorismate: step 4/5. In terms of biological role, bifunctional enzyme that catalyzes the second and fourth steps of tryptophan biosynthetic pathway. The second step is catalyzed by the anthranilate phosphoribosyltransferase, coded by the TrpD domain and the fourth step is catalyzed by indole-3-glycerol phosphate synthase, coded by the TrpC domain. The protein is Tryptophan biosynthesis protein TrpCD (trpCD) of Archaeoglobus fulgidus (strain ATCC 49558 / DSM 4304 / JCM 9628 / NBRC 100126 / VC-16).